A 244-amino-acid polypeptide reads, in one-letter code: 7-cyano-7-deazaguanine synthase (244 aa).

Residue 14-24 coordinates ATP; the sequence is FSGGQDSATCV. 4 residues coordinate Zn(2+): Cys-202, Cys-217, Cys-220, and Cys-223.

It belongs to the QueC family. Requires Zn(2+) as cofactor.

The catalysed reaction is 7-carboxy-7-deazaguanine + NH4(+) + ATP = 7-cyano-7-deazaguanine + ADP + phosphate + H2O + H(+). It participates in purine metabolism; 7-cyano-7-deazaguanine biosynthesis. Its function is as follows. Catalyzes the ATP-dependent conversion of 7-carboxy-7-deazaguanine (CDG) to 7-cyano-7-deazaguanine (preQ(0)). The protein is 7-cyano-7-deazaguanine synthase of Burkholderia cenocepacia (strain ATCC BAA-245 / DSM 16553 / LMG 16656 / NCTC 13227 / J2315 / CF5610) (Burkholderia cepacia (strain J2315)).